We begin with the raw amino-acid sequence, 266 residues long: Outer kinetochore KNL1 complex subunit ZWINT (266 aa).

The disordered stretch occupies residues 95–115 (DQNPDALASEDTSRQKATETK). The span at 105–115 (DTSRQKATETK) shows a compositional bias: basic and acidic residues. Positions 136-237 (LSEALPQVKE…QRNQSYLQLL (102 aa)) form a coiled coil. 2 positions are modified to phosphoserine: S232 and S265.

As to quaternary structure, component of the KNL1 complex composed of KNL1 and ZWINT. Part of the ten-subunit outer kinetochore KMN network that includes the KNL1, MIS12 and NDC80 complexes; a bioriented kinetochore contains approximately 150 copies of the network. Interacts with the MIS12 complex subunits MIS12 DSN1, and PMF1. Interacts with the NDC80 complex subunit NDC80 during mitosis. Interacts with ZW10. Interacts with CETN3. Expressed abundantly in brain and at lower levels in testis and kidney.

It localises to the nucleus. The protein localises to the chromosome. It is found in the centromere. Its subcellular location is the kinetochore. Acts as a component of the outer kinetochore KNL1 complex that serves as a docking point for spindle assembly checkpoint components and mediates microtubule-kinetochore interactions. Kinetochores, consisting of a centromere-associated inner segment and a microtubule-contacting outer segment, play a crucial role in chromosome segregation by mediating the physical connection between centromeric DNA and spindle microtubules. The outer kinetochore is made up of the ten-subunit KMN network, comprising the MIS12, NDC80 and KNL1 complexes, and auxiliary microtubule-associated components; together they connect the outer kinetochore with the inner kinetochore, bind microtubules, and mediate interactions with mitotic checkpoint proteins that delay anaphase until chromosomes are bioriented on the spindle. Targets the RZZ complex to the kinetochore at prometaphase. Recruits MAD2L1 to the kinetochore, but is not required for BUB1B localization. In addition to orienting mitotic chromosomes, it is also essential for alignment of homologous chromosomes during meiotic metaphase I. In meiosis I, required to activate the spindle assembly checkpoint at unattached kinetochores to correct erroneous kinetochore-microtubule attachments. The protein is Outer kinetochore KNL1 complex subunit ZWINT (Zwint) of Rattus norvegicus (Rat).